A 938-amino-acid polypeptide reads, in one-letter code: MSDYKSTLNLPETGFPMRGDLAKREPGMLARWTDDDLYGIIRAAKKGKKTFILHDGPPYANGSIHIGHSVNKILKDIIVKSKGLSGYDSPYVPGWDCHGLPIELKVEQEYGKPGEKFTAAEFRAKCREYAATQVDGQRKDFIRLGVLGDWSHPYLTMDFKTEANIIRALGKIIGNGHLHKGAKPVHWCVDCRSALAEAEVEYYDKTSPSIDVAFQAVDQDALKAKFAVSNVNGPISLVIWTTTPWTLPANRAISIAPDFDYALVQIDGQAVILAKDLVESVMQRIGVTDYTILGTVKGAELELLRFTHPFMGFDVPAILGDHVTLDAGTGAVHTAPGHGPDDYVIGQKYGLETANPVGPDGTYLPGTYPTLDGVNVFKANDIVVALLQEKGALLHVEKMQHSYPCCWRHKTPIIFRATPQWFVSMDQKGLRAQSLKEIKGVQWIPDWGQARIESMVANRPDWCISRQRTWGVPMSLFVHKDTEELHPRTLELMEEVAKRVEVDGIQAWWDLDAKELLGDEADQYVKVPDTLDVWFDSGSTHSSVVDVRPEFAGHAADMYLEGSDQHRGWFMSSLMISTAMKGKAPYRQVLTHGFTVDGQGRKMSKSIGNTVSPQDVMNKLGADILRLWVASTDYTGEMAVSDEILKRAADSYRRIRNTARFLLANLNGFDPAKDMVKPEEMVVLDRWAVGCAKAAQEDILKAYEAYDFHEVVQRLMRFCSVEMGSFYLDIIKDRQYTAKADSVARRSCQTALYHIAEALVRWMAPILSFTADEVWGYLPGEREKYVFTGEWYEGLFGLADSEAMNDAFWDELLKVRGEVNKVIEQARADKKVGGSLEAAVTLFAEPELAAKLTALGDELRFVLLTSGATVADYNDAPADAQQSEVLKGLKVALSKAEGEKCPRCWHYTQDVGKVAEHAEICGRCVSNVAGDGEKRKFA.

The 'HIGH' region motif lies at 58 to 68; it reads PYANGSIHIGH. The residue at position 183 (K183) is an N6-acetyllysine. L-isoleucyl-5'-AMP is bound at residue E561. Positions 602–606 match the 'KMSKS' region motif; that stretch reads KMSKS. K605 contributes to the ATP binding site. 4 residues coordinate Zn(2+): C901, C904, C921, and C924.

The protein belongs to the class-I aminoacyl-tRNA synthetase family. IleS type 1 subfamily. Monomer. Requires Zn(2+) as cofactor.

It localises to the cytoplasm. It carries out the reaction tRNA(Ile) + L-isoleucine + ATP = L-isoleucyl-tRNA(Ile) + AMP + diphosphate. Its function is as follows. Catalyzes the attachment of isoleucine to tRNA(Ile). As IleRS can inadvertently accommodate and process structurally similar amino acids such as valine, to avoid such errors it has two additional distinct tRNA(Ile)-dependent editing activities. One activity is designated as 'pretransfer' editing and involves the hydrolysis of activated Val-AMP. The other activity is designated 'posttransfer' editing and involves deacylation of mischarged Val-tRNA(Ile). This Escherichia coli O17:K52:H18 (strain UMN026 / ExPEC) protein is Isoleucine--tRNA ligase.